The chain runs to 347 residues: Beta-hexosaminidase (347 aa).

Substrate is bound by residues D62, R70, R134, and 164-165 (KH). H177 functions as the Proton donor/acceptor in the catalytic mechanism. The active-site Nucleophile is D249.

Belongs to the glycosyl hydrolase 3 family. NagZ subfamily.

It localises to the cytoplasm. It catalyses the reaction Hydrolysis of terminal non-reducing N-acetyl-D-hexosamine residues in N-acetyl-beta-D-hexosaminides.. Its pathway is cell wall biogenesis; peptidoglycan recycling. Functionally, plays a role in peptidoglycan recycling by cleaving the terminal beta-1,4-linked N-acetylglucosamine (GlcNAc) from peptide-linked peptidoglycan fragments, giving rise to free GlcNAc, anhydro-N-acetylmuramic acid and anhydro-N-acetylmuramic acid-linked peptides. In Mannheimia succiniciproducens (strain KCTC 0769BP / MBEL55E), this protein is Beta-hexosaminidase.